A 201-amino-acid chain; its full sequence is MIEYVRGELAELSPATAVIDCNGVGYAANISLNTYSAIQGKKNCKLYIYEAIREDAYVLYGFADKQEREIFLLLISVSGIGGNTARMILSALSPAELVNVISTENANLLKTVKGIGLKTAQRVIVDLKDKIKTMGATVAGGSASAGMLLQSASVEVQEEAVAALTMLGFAAAPSQKVVLAILKEEPDAPVEKVIKLALKRL.

Residues 1 to 63 (MIEYVRGELA…EDAYVLYGFA (63 aa)) are domain I. The segment at 64–142 (DKQEREIFLL…TMGATVAGGS (79 aa)) is domain II. The flexible linker stretch occupies residues 143 to 151 (ASAGMLLQS). A domain III region spans residues 152-201 (ASVEVQEEAVAALTMLGFAAAPSQKVVLAILKEEPDAPVEKVIKLALKRL).

Belongs to the RuvA family. In terms of assembly, homotetramer. Forms an RuvA(8)-RuvB(12)-Holliday junction (HJ) complex. HJ DNA is sandwiched between 2 RuvA tetramers; dsDNA enters through RuvA and exits via RuvB. An RuvB hexamer assembles on each DNA strand where it exits the tetramer. Each RuvB hexamer is contacted by two RuvA subunits (via domain III) on 2 adjacent RuvB subunits; this complex drives branch migration. In the full resolvosome a probable DNA-RuvA(4)-RuvB(12)-RuvC(2) complex forms which resolves the HJ.

Its subcellular location is the cytoplasm. In terms of biological role, the RuvA-RuvB-RuvC complex processes Holliday junction (HJ) DNA during genetic recombination and DNA repair, while the RuvA-RuvB complex plays an important role in the rescue of blocked DNA replication forks via replication fork reversal (RFR). RuvA specifically binds to HJ cruciform DNA, conferring on it an open structure. The RuvB hexamer acts as an ATP-dependent pump, pulling dsDNA into and through the RuvAB complex. HJ branch migration allows RuvC to scan DNA until it finds its consensus sequence, where it cleaves and resolves the cruciform DNA. This chain is Holliday junction branch migration complex subunit RuvA, found in Bacteroides thetaiotaomicron (strain ATCC 29148 / DSM 2079 / JCM 5827 / CCUG 10774 / NCTC 10582 / VPI-5482 / E50).